A 414-amino-acid chain; its full sequence is Eukaryotic initiation factor 4A (414 aa).

Positions 41-69 (ESFDDMGLQENLLRGIYAYGFEKPSAIQQ) match the Q motif motif. The region spanning 72–242 (IVPFCKGLDV…RKFMNKPVRI (171 aa)) is the Helicase ATP-binding domain. 85–92 (AQSGTGKT) is an ATP binding site. The DEAD box motif lies at 190–193 (DEAD). The Helicase C-terminal domain occupies 253–414 (GIKQFYVNVE…ELPANVADLL (162 aa)).

The protein belongs to the DEAD box helicase family. eIF4A subfamily. In terms of assembly, eIF4F is a multi-subunit complex, the composition of which varies with external and internal environmental conditions. It is composed of at least EIF4A, EIF4E and EIF4G.

The enzyme catalyses ATP + H2O = ADP + phosphate + H(+). ATP-dependent RNA helicase which is a subunit of the eIF4F complex involved in cap recognition and is required for mRNA binding to ribosome. In the current model of translation initiation, eIF4A unwinds RNA secondary structures in the 5'-UTR of mRNAs which is necessary to allow efficient binding of the small ribosomal subunit, and subsequent scanning for the initiator codon. This Triticum aestivum (Wheat) protein is Eukaryotic initiation factor 4A.